A 165-amino-acid polypeptide reads, in one-letter code: Small ribosomal subunit protein uS5 (165 aa).

One can recognise an S5 DRBM domain in the interval 10 to 73 (QIEKLISLNR…TSARKNLRFV (64 aa)).

The protein belongs to the universal ribosomal protein uS5 family. Part of the 30S ribosomal subunit. Contacts proteins S4 and S8.

In terms of biological role, with S4 and S12 plays an important role in translational accuracy. Its function is as follows. Located at the back of the 30S subunit body where it stabilizes the conformation of the head with respect to the body. This is Small ribosomal subunit protein uS5 from Borreliella burgdorferi (strain ATCC 35210 / DSM 4680 / CIP 102532 / B31) (Borrelia burgdorferi).